Consider the following 321-residue polypeptide: Probable pectate lyase A (321 aa).

Positions 1 to 18 are cleaved as a signal peptide; that stretch reads MKFVATLIACGLSGLALA. Asn93 carries N-linked (GlcNAc...) asparagine glycosylation. 3 residues coordinate Ca(2+): Asp134, Asp163, and Asp167. Arg220 is a catalytic residue. Residue Asn238 is glycosylated (N-linked (GlcNAc...) asparagine).

The protein belongs to the polysaccharide lyase 1 family. The cofactor is Ca(2+).

It is found in the secreted. The enzyme catalyses Eliminative cleavage of (1-&gt;4)-alpha-D-galacturonan to give oligosaccharides with 4-deoxy-alpha-D-galact-4-enuronosyl groups at their non-reducing ends.. Pectinolytic enzyme consist of four classes of enzymes: pectin lyase, polygalacturonase, pectin methylesterase and rhamnogalacturonase. Among pectinolytic enzymes, pectin lyase is the most important in depolymerization of pectin, since it cleaves internal glycosidic bonds of highly methylated pectins. Favors pectate, the anion, over pectin, the methyl ester. The polypeptide is Probable pectate lyase A (plyA) (Neosartorya fischeri (strain ATCC 1020 / DSM 3700 / CBS 544.65 / FGSC A1164 / JCM 1740 / NRRL 181 / WB 181) (Aspergillus fischerianus)).